Consider the following 409-residue polypeptide: MSDVKKAVLAYSGGLDTSVILKWLQDTYQCEVVTFTADLGQGEELEPARQKALKFGIKPDNIFIDDLREEFVRDFVFPMFRCNTVYEGEYLLGTSIARPLIAKRQIEIARATGADAVSHGATGKGNDQVRFELGYYALMPGVKVIAPWREWDLLSREKLLAYAEKHGIPIEMKHKQGGSPYSMDANLLHISFEGRHLENPAAEAEESMWRWTVSPEAAPDAAEYLDLEFERGDLVAINGTRMKAHELLAKLNELGGKHGIGRLDLVENRYVGMKSRGCYETPGGTILLRAHRAIESVTLDREVAHLKDDLMPRYASLIYNGYWWSPERRALQALIDNTQESVNGWVRVKLYKGNVIVTGRDSKTDSLFDPTIATFEDDQGAYNQKDAHGFIRLNALRMRIAANAQTKRG.

Residues 10 to 18 and Ala-37 contribute to the ATP site; that span reads AYSGGLDTS. The L-citrulline site is built by Tyr-90 and Ser-95. Gly-120 serves as a coordination point for ATP. 3 residues coordinate L-aspartate: Thr-122, Asn-126, and Asp-127. Residue Asn-126 participates in L-citrulline binding. L-citrulline-binding residues include Arg-130, Ser-182, Ser-191, Glu-267, and Tyr-279.

The protein belongs to the argininosuccinate synthase family. Type 1 subfamily. Homotetramer.

It localises to the cytoplasm. It carries out the reaction L-citrulline + L-aspartate + ATP = 2-(N(omega)-L-arginino)succinate + AMP + diphosphate + H(+). Its pathway is amino-acid biosynthesis; L-arginine biosynthesis; L-arginine from L-ornithine and carbamoyl phosphate: step 2/3. The polypeptide is Argininosuccinate synthase (Aromatoleum aromaticum (strain DSM 19018 / LMG 30748 / EbN1) (Azoarcus sp. (strain EbN1))).